The chain runs to 231 residues: Superoxide dismutase [Mn], mitochondrial (231 aa).

The N-terminal 27 residues, 1–27 (MALRTLASRKTLAAAALPLAAAAAARG), are a transit peptide targeting the mitochondrion. His-55, His-103, Asp-192, and His-196 together coordinate Mn(2+).

It belongs to the iron/manganese superoxide dismutase family. As to quaternary structure, homotetramer. It depends on Mn(2+) as a cofactor.

Its subcellular location is the mitochondrion matrix. It carries out the reaction 2 superoxide + 2 H(+) = H2O2 + O2. Destroys superoxide anion radicals which are normally produced within the cells and which are toxic to biological systems. In Oryza sativa subsp. japonica (Rice), this protein is Superoxide dismutase [Mn], mitochondrial (SODA).